Here is a 367-residue protein sequence, read N- to C-terminus: Ferredoxin--NADP reductase 2 (367 aa).

The FAD site is built by Asp-56, Gln-64, Tyr-69, Val-109, Phe-144, Asp-309, and Thr-350.

This sequence belongs to the ferredoxin--NADP reductase type 2 family. Homodimer. It depends on FAD as a cofactor.

It carries out the reaction 2 reduced [2Fe-2S]-[ferredoxin] + NADP(+) + H(+) = 2 oxidized [2Fe-2S]-[ferredoxin] + NADPH. This Cupriavidus metallidurans (strain ATCC 43123 / DSM 2839 / NBRC 102507 / CH34) (Ralstonia metallidurans) protein is Ferredoxin--NADP reductase 2.